Consider the following 133-residue polypeptide: MIIGIGVDIIEIERVRQAIQNNKNFLSKLFTEREIDYFISRNMNSEVIAGNFAAKEAVSKALGTGIRGFSFKDIEILRNELGKPEVILHNGANLIGNKLVENNNSLRVHLSISHNNSSAIAYSVLEGEYYGNM.

Residues D8 and E56 each contribute to the Mg(2+) site.

It belongs to the P-Pant transferase superfamily. AcpS family. Mg(2+) serves as cofactor.

Its subcellular location is the cytoplasm. The enzyme catalyses apo-[ACP] + CoA = holo-[ACP] + adenosine 3',5'-bisphosphate + H(+). Transfers the 4'-phosphopantetheine moiety from coenzyme A to a Ser of acyl-carrier-protein. The chain is Holo-[acyl-carrier-protein] synthase from Clostridium perfringens (strain ATCC 13124 / DSM 756 / JCM 1290 / NCIMB 6125 / NCTC 8237 / Type A).